Consider the following 388-residue polypeptide: Succinate--CoA ligase [ADP-forming] subunit beta (388 aa).

An ATP-grasp domain is found at 9-244; that stretch reads KALFAEYGLP…PSQDDAREAH (236 aa). Residues K46, 53–55, E99, T102, and E107 contribute to the ATP site; that span reads GRG. Mg(2+) contacts are provided by N199 and D213. Substrate-binding positions include N264 and 321-323; that span reads GIV.

Belongs to the succinate/malate CoA ligase beta subunit family. Heterotetramer of two alpha and two beta subunits. Requires Mg(2+) as cofactor.

It carries out the reaction succinate + ATP + CoA = succinyl-CoA + ADP + phosphate. The enzyme catalyses GTP + succinate + CoA = succinyl-CoA + GDP + phosphate. It functions in the pathway carbohydrate metabolism; tricarboxylic acid cycle; succinate from succinyl-CoA (ligase route): step 1/1. In terms of biological role, succinyl-CoA synthetase functions in the citric acid cycle (TCA), coupling the hydrolysis of succinyl-CoA to the synthesis of either ATP or GTP and thus represents the only step of substrate-level phosphorylation in the TCA. The beta subunit provides nucleotide specificity of the enzyme and binds the substrate succinate, while the binding sites for coenzyme A and phosphate are found in the alpha subunit. The polypeptide is Succinate--CoA ligase [ADP-forming] subunit beta (Shewanella loihica (strain ATCC BAA-1088 / PV-4)).